The following is a 32-amino-acid chain: Dermaseptin-L1 (32 aa).

In terms of tissue distribution, expressed by the skin glands.

It is found in the secreted. Its function is as follows. Antimicrobial peptide active against the Gram-negative bacterium E.coli (MIC=8 uM) but inactive against the Gram-positive bacterium S.aureus. Also inhibits growth of zoospores of the chytrid fungus B.dendrobatidis at high concentrations (above 25 uM). Shows anticancer activities since it is cytolytic against HepG2 human hepatoma-derived cells (LC(50)=45 uM). Is only weakly hemolytic on human erythrocytes. The polypeptide is Dermaseptin-L1 (Agalychnis lemur (Lemur leaf frog)).